The sequence spans 545 residues: MFILNNRKWRKLKRDPSAFFRDSKFNFLRYFSAKKFAKNFKNSSHIHKTNISKAQSNISSTLKQNRKQDMLIPINFFNFEYIVKELNNQNAIGVYILPSNLTLKPALCILESHKEDFLNKFLLTISSENLKLQYKFNGQIKNPKSVNEIWTDLFSIAHVDMKLSTDRTLSSSISQFWFRLEFCKEDKDFILFPTANRYSRKLWKHSIKNNQLFKEGIRNYSEISSLPYEEDHNFDIDLVFTWVNSEDKNWQELYKKYKPDFNSDATSTSRFLSRDELKFALRSWEMNGSFIRKIFIVSNCAPPAWLDLNNPKIQWVYHEEIMPQSALPTFSSHAIETSLHHIPGISNYFIYSNDDFLLTKPLNKDNFFYSNGIAKLRLEAWGNVNGECTEGEPDYLNGARNANTLLEKEFKKFTTKLHTHSPQSMRTDILFEMEKKYPEEFNRTLHNKFRSLDDIAVTGYLYHHYALLSGRALQSSDKTELVQQNHDFKKKLNNVVTLTKERNFDKLPLSVCINDGADSHLNEEWNVQVIKFLETLFPLPSSFEK.

It belongs to the stealth family.

Its function is as follows. May be the polymerase that links individual UDP-N-acetyl-D-mannosamine monomers. In serotype A the capsule is composed of repeated units of (alpha 1-6)-linked N-acetyl-D-mannosamine-1-phosphate. In Neisseria meningitidis serogroup A, this protein is Capsular polysaccharide phosphotransferase SacB (sacB).